The chain runs to 2189 residues: Chromatin modification-related protein eaf-1 (2189 aa).

Disordered regions lie at residues 183 to 400 (VQGS…SGAE), 415 to 438 (VIGK…TQHP), and 477 to 601 (EVAK…PPGL). A compositionally biased stretch (low complexity) spans 234 to 253 (PTPQTVAPPATAPTSTTKTA). Over residues 260–277 (AGPKDDTVSRGDAEEKAR) the composition is skewed to basic and acidic residues. Composition is skewed to polar residues over residues 281–293 (TITS…SNGD), 300–312 (TLSS…QSAP), and 319–333 (ASAS…SQSF). Positions 336-349 (PVSRPEQELRRATT) are enriched in basic and acidic residues. Positions 534-543 (QPQPSSTAPS) are enriched in low complexity. Polar residues predominate over residues 573-583 (ETQARTSQSSH). The 76-residue stretch at 722-797 (PVRCLEPARP…PPVRAVDNAD (76 aa)) folds into the HSA domain. The Myb-like domain occupies 985–1045 (FESRIASQWT…ECFERWVNLE (61 aa)). 2 stretches are compositionally biased toward low complexity: residues 1320 to 1330 (VAVQLQQQQHQ) and 1336 to 1406 (QHPQ…QVTQ). Disordered regions lie at residues 1320 to 1428 (VAVQ…PMRP), 1622 to 1644 (MQTQ…QAQA), 1663 to 1831 (QKQA…GQVQ), and 1846 to 2189 (VQGQ…APTK). 5 stretches are compositionally biased toward low complexity: residues 1663-1808 (QKQA…QGQG), 1818-1831 (GQGH…GQVQ), 1846-1863 (VQGQ…PQHA), 1873-2089 (QHAQ…QPQQ), and 2097-2189 (SQPQ…APTK).

It belongs to the EAF1 family. Component of the NuA4 histone acetyltransferase complex.

Its subcellular location is the nucleus. In terms of biological role, component of the NuA4 histone acetyltransferase complex which is involved in transcriptional activation of selected genes principally by acetylation of nucleosomal histone H4 and H2A. The NuA4 complex is also involved in DNA repair. In Neurospora crassa (strain ATCC 24698 / 74-OR23-1A / CBS 708.71 / DSM 1257 / FGSC 987), this protein is Chromatin modification-related protein eaf-1 (eaf-1).